The following is a 66-amino-acid chain: UPF0370 protein YpfN (66 aa).

Residues 4-24 (LAKYWWILVLVFLVGVLLNVI) form a helical membrane-spanning segment. Residues 39–66 (KPELPPHRDFNDKWDDEEDWPKKDQPKK) form a disordered region. A compositionally biased stretch (basic and acidic residues) spans 42–51 (LPPHRDFNDK).

This sequence belongs to the UPF0370 family.

The protein resides in the cell membrane. This is UPF0370 protein YpfN from Salmonella paratyphi A (strain AKU_12601).